The chain runs to 311 residues: Glycine-betaine-binding protein (311 aa).

The signal sequence occupies residues 1–23 (MNRLIRSLCLACAGLFAAGLAQA).

This sequence belongs to the OsmX family.

The protein resides in the periplasm. Its function is as follows. Binds glycine-betaine. The protein is Glycine-betaine-binding protein of Pseudomonas aeruginosa (strain ATCC 15692 / DSM 22644 / CIP 104116 / JCM 14847 / LMG 12228 / 1C / PRS 101 / PAO1).